A 733-amino-acid polypeptide reads, in one-letter code: Folic acid synthesis protein fol1 (733 aa).

DHNA regions lie at residues 55-167 and 179-277; these read VVVE…YAER and IEFS…QIYR. The residue at position 281 (Tyr-281) is a Phosphotyrosine. The tract at residues 295 to 454 is HPK; that stretch reads NKIAYLSFGS…LPSQGIRLYS (160 aa). The 260-residue stretch at 465–724 folds into the Pterin-binding domain; the sequence is ALTMGILNVT…DTKEMSKVVG (260 aa). The tract at residues 467–733 is DHPS; sequence TMGILNVTPD…GMANAIRYVP (267 aa). Residue Asn-472 participates in Mg(2+) binding. Residues Thr-511, Asp-546, Asn-565, Asp-637, Lys-677, and 712–714 each bind (7,8-dihydropterin-6-yl)methyl diphosphate; that span reads RVH.

The protein in the N-terminal section; belongs to the DHNA family. In the central section; belongs to the HPPK family. It in the C-terminal section; belongs to the DHPS family. Requires Mg(2+) as cofactor.

Its subcellular location is the cytoplasm. The catalysed reaction is 7,8-dihydroneopterin = 6-hydroxymethyl-7,8-dihydropterin + glycolaldehyde. The enzyme catalyses 6-hydroxymethyl-7,8-dihydropterin + ATP = (7,8-dihydropterin-6-yl)methyl diphosphate + AMP + H(+). It carries out the reaction (7,8-dihydropterin-6-yl)methyl diphosphate + 4-aminobenzoate = 7,8-dihydropteroate + diphosphate. It participates in cofactor biosynthesis; tetrahydrofolate biosynthesis; 2-amino-4-hydroxy-6-hydroxymethyl-7,8-dihydropteridine diphosphate from 7,8-dihydroneopterin triphosphate: step 3/4. Its pathway is cofactor biosynthesis; tetrahydrofolate biosynthesis; 2-amino-4-hydroxy-6-hydroxymethyl-7,8-dihydropteridine diphosphate from 7,8-dihydroneopterin triphosphate: step 4/4. It functions in the pathway cofactor biosynthesis; tetrahydrofolate biosynthesis; 7,8-dihydrofolate from 2-amino-4-hydroxy-6-hydroxymethyl-7,8-dihydropteridine diphosphate and 4-aminobenzoate: step 1/2. Functionally, catalyzes three sequential steps of tetrahydrofolate biosynthesis. The protein is Folic acid synthesis protein fol1 (fol1) of Schizosaccharomyces pombe (strain 972 / ATCC 24843) (Fission yeast).